A 406-amino-acid chain; its full sequence is Ascaroside receptor GPR2 (406 aa).

Topologically, residues 1-29 are extracellular; it reads MTQLPYLLDRRGGALAAPATAWGDMMLNR. A helical transmembrane segment spans residues 30–50; sequence ALFSVALLSSVGSAWVVLSYA. Residues 51–61 are Cytoplasmic-facing; that stretch reads CIKELRSYRHQ. Residues 62-82 form a helical membrane-spanning segment; that stretch reads LILGLAISDLLMSLNFMFSAG. Over 83 to 107 the chain is Extracellular; sequence WNVAGGDLALEESRTACSVNGFLTQ. Residues Cys-99 and Cys-173 are joined by a disulfide bond. The helical transmembrane segment at 108-128 threads the bilayer; that stretch reads VFVVQTDWWILVIAIATYIIL. Over 129-143 the chain is Cytoplasmic; that stretch reads GNFKTQSQFIQTHVW. Residues 144–164 form a helical membrane-spanning segment; it reads IPWVGPWVLSIIIAAICHGVL. The Extracellular portion of the chain corresponds to 165–185; that stretch reads GYGYIGGWCWLTSDLMRLLIN. A helical membrane pass occupies residues 186–206; that stretch reads FIPRWLIVIAIALIYIRLYMI. The Cytoplasmic portion of the chain corresponds to 207 to 326; that stretch reads VRKARKWDIE…AAQLKRIAKK (120 aa). Residues 327 to 347 form a helical membrane-spanning segment; sequence MMVYPVAYAIIWACPTAIRIY. The Extracellular segment spans residues 348–356; that stretch reads QGTTGSRAP. A helical membrane pass occupies residues 357 to 377; that stretch reads LWITIVDKSCIVIQGLVDAVV. At 378 to 406 the chain is on the cytoplasmic side; that stretch reads YGLNERAWQGWRDHIRRIIYKNEGGRIIG.

The protein belongs to the G-protein coupled receptor 1 family. In terms of assembly, interacts with ascaroside receptor GPR3; may form a functional heterodimer. Interacts with guanine nucleotide-binding protein alpha GPA2; to activate adenylate cyclase and positively regulate nematode trap formation.

Its subcellular location is the cell membrane. Its function is as follows. G protein-coupled receptor that senses nematode ascaroside pheromones and signals via adenylate cyclase to positively regulate trap formation for nematode capture. The sequence is that of Ascaroside receptor GPR2 from Arthrobotrys oligospora (strain ATCC 24927 / CBS 115.81 / DSM 1491) (Nematode-trapping fungus).